The following is a 274-amino-acid chain: Bis(5'-nucleosyl)-tetraphosphatase, symmetrical (274 aa).

The protein belongs to the Ap4A hydrolase family.

It catalyses the reaction P(1),P(4)-bis(5'-adenosyl) tetraphosphate + H2O = 2 ADP + 2 H(+). In terms of biological role, hydrolyzes diadenosine 5',5'''-P1,P4-tetraphosphate to yield ADP. The polypeptide is Bis(5'-nucleosyl)-tetraphosphatase, symmetrical (Shewanella sediminis (strain HAW-EB3)).